A 536-amino-acid chain; its full sequence is Chaperonin GroEL (536 aa).

ATP contacts are provided by residues 29 to 32 (TLGP), 86 to 90 (DGTTT), G412, and D493.

This sequence belongs to the chaperonin (HSP60) family. In terms of assembly, forms a cylinder of 14 subunits composed of two heptameric rings stacked back-to-back. Interacts with the co-chaperonin GroES.

It localises to the cytoplasm. It carries out the reaction ATP + H2O + a folded polypeptide = ADP + phosphate + an unfolded polypeptide.. Functionally, together with its co-chaperonin GroES, plays an essential role in assisting protein folding. The GroEL-GroES system forms a nano-cage that allows encapsulation of the non-native substrate proteins and provides a physical environment optimized to promote and accelerate protein folding. This chain is Chaperonin GroEL, found in Onion yellows phytoplasma (strain OY-M).